Consider the following 367-residue polypeptide: 3-dehydroquinate synthase (367 aa).

Residues 69–74 (DGEAFK), 103–107 (GVIGD), 127–128 (TT), K140, and K149 each bind NAD(+). Positions 182, 245, and 262 each coordinate Zn(2+).

Belongs to the sugar phosphate cyclases superfamily. Dehydroquinate synthase family. Requires Co(2+) as cofactor. Zn(2+) serves as cofactor. It depends on NAD(+) as a cofactor.

The protein resides in the cytoplasm. It carries out the reaction 7-phospho-2-dehydro-3-deoxy-D-arabino-heptonate = 3-dehydroquinate + phosphate. It functions in the pathway metabolic intermediate biosynthesis; chorismate biosynthesis; chorismate from D-erythrose 4-phosphate and phosphoenolpyruvate: step 2/7. Catalyzes the conversion of 3-deoxy-D-arabino-heptulosonate 7-phosphate (DAHP) to dehydroquinate (DHQ). This chain is 3-dehydroquinate synthase, found in Pseudomonas syringae pv. syringae (strain B728a).